Here is a 58-residue protein sequence, read N- to C-terminus: Large ribosomal subunit protein uL30 (58 aa).

This sequence belongs to the universal ribosomal protein uL30 family. As to quaternary structure, part of the 50S ribosomal subunit.

This Bacteroides fragilis (strain ATCC 25285 / DSM 2151 / CCUG 4856 / JCM 11019 / LMG 10263 / NCTC 9343 / Onslow / VPI 2553 / EN-2) protein is Large ribosomal subunit protein uL30.